Consider the following 275-residue polypeptide: MDLLKTPSSTVGLSETFARLKSQGKVALIPYITAGDPDLSTTAKALKVLDSCGSDIIELGVPYSDPLADGPAIQAAARRSLLKGTNFNSIISMLKEVIPQLSCPIALFTYYNPILRRGVENYMTVIKNAGVHGLLVPDVPLEETETLRNEARKHQIELVLLTTPTTPKERMNAIVEASEGFIYLVSSVGVTGTRESVNEKVQSLLQQIKEATSKPVAVGFGISKPEHVKQVAEWGADGVIVGSAMVKILGESESPEQGLKELEFFTKSLKSALVS.

Catalysis depends on proton acceptor residues glutamate 58 and aspartate 69.

It belongs to the TrpA family. Tetramer of two alpha and two beta chains. As to expression, ubiquitously expressed at low levels in seedlings, roots, hypocotyls, cotyledons, stems, leaves, inflorescences, flowers, siliques and seeds.

The protein localises to the cytoplasm. It carries out the reaction (1S,2R)-1-C-(indol-3-yl)glycerol 3-phosphate + L-serine = D-glyceraldehyde 3-phosphate + L-tryptophan + H2O. The enzyme catalyses (1S,2R)-1-C-(indol-3-yl)glycerol 3-phosphate = indole + D-glyceraldehyde 3-phosphate. The protein operates within amino-acid biosynthesis; L-tryptophan biosynthesis; L-tryptophan from chorismate: step 5/5. Functionally, the alpha subunit is responsible for the aldol cleavage of indoleglycerol phosphate to indole and glyceraldehyde 3-phosphate. Contributes to the tryptophan-independent indole biosynthesis, and possibly to auxin production. The protein is Tryptophan synthase alpha chain (TRPA1) of Arabidopsis thaliana (Mouse-ear cress).